The sequence spans 434 residues: Ribosomal protein uS12 methylthiotransferase RimO (434 aa).

The 117-residue stretch at 6-122 (NRVFLLSLGC…ILTAIGARYR (117 aa)) folds into the MTTase N-terminal domain. 6 residues coordinate [4Fe-4S] cluster: C15, C51, C85, C146, C150, and C153. Residues 132–361 (TAPGHTSFLK…MELQEGISEE (230 aa)) enclose the Radical SAM core domain. Residues 364 to 431 (KRLEGREIAV…PYELFGTVLK (68 aa)) enclose the TRAM domain.

Belongs to the methylthiotransferase family. RimO subfamily. It depends on [4Fe-4S] cluster as a cofactor.

It is found in the cytoplasm. The catalysed reaction is L-aspartate(89)-[ribosomal protein uS12]-hydrogen + (sulfur carrier)-SH + AH2 + 2 S-adenosyl-L-methionine = 3-methylsulfanyl-L-aspartate(89)-[ribosomal protein uS12]-hydrogen + (sulfur carrier)-H + 5'-deoxyadenosine + L-methionine + A + S-adenosyl-L-homocysteine + 2 H(+). Its function is as follows. Catalyzes the methylthiolation of an aspartic acid residue of ribosomal protein uS12. The polypeptide is Ribosomal protein uS12 methylthiotransferase RimO (Chlorobium phaeovibrioides (strain DSM 265 / 1930) (Prosthecochloris vibrioformis (strain DSM 265))).